The sequence spans 412 residues: Peptidase T (412 aa).

Histidine 84 is a Zn(2+) binding site. Aspartate 86 is a catalytic residue. Position 146 (aspartate 146) interacts with Zn(2+). Glutamate 179 (proton acceptor) is an active-site residue. Glutamate 180, aspartate 202, and histidine 385 together coordinate Zn(2+).

This sequence belongs to the peptidase M20B family. It depends on Zn(2+) as a cofactor.

Its subcellular location is the cytoplasm. It catalyses the reaction Release of the N-terminal residue from a tripeptide.. In terms of biological role, cleaves the N-terminal amino acid of tripeptides. This is Peptidase T from Haemophilus influenzae (strain ATCC 51907 / DSM 11121 / KW20 / Rd).